The sequence spans 119 residues: Autophagy-related protein 8h (119 aa).

Glycine 119 carries Phosphatidylethanolamine amidated glycine lipidation.

It belongs to the ATG8 family. In terms of assembly, interacts with ATG4. Interacts with ATI1. In terms of processing, gly-119 forms then a thioester bond with the 'Cys-558' of ATG7 (E1-like activating enzyme) before being transferred to the 'Cys-258' of ATG3 (the specific E2 conjugating enzyme), in order to be finally amidated with phosphatidylethanolamine. This lipid modification anchors ATG8 to autophagosomes. In terms of tissue distribution, constitutively expressed.

The protein resides in the cytoplasmic vesicle. It localises to the autophagosome membrane. Its subcellular location is the vacuole membrane. It is found in the cytoplasm. The protein localises to the cytoskeleton. In terms of biological role, ubiquitin-like modifier involved in autophagosomes formation. May mediate the delivery of the autophagosomes to the vacuole via the microtubule cytoskeleton. This Arabidopsis thaliana (Mouse-ear cress) protein is Autophagy-related protein 8h (ATG8H).